We begin with the raw amino-acid sequence, 741 residues long: ATP-dependent RNA helicase DRS1 (741 aa).

The segment covering 35 to 44 (VKNKKNKKSK) has biased composition (basic residues). 2 disordered regions span residues 35-63 (VKNKKNKKSKAQPQQKEEDEEKNEDINPN) and 106-200 (GGLV…EDTA). 2 stretches are compositionally biased toward acidic residues: residues 118-147 (KEEEVEDEEEEENDEDIQNEDEDEGEEELA) and 159-200 (VIDE…EDTA). Residues 222 to 250 (TTFQTLQLSRPVLKGLSQLGYTKPSPIQS) carry the Q motif motif. The Helicase ATP-binding domain maps to 253 to 429 (IPIALLGRDI…QLSLQRPVRI (177 aa)). 266-273 (AVTGSGKT) lines the ATP pocket. The short motif at 376–379 (DEAD) is the DEAD box element. A Helicase C-terminal domain is found at 458 to 603 (LLFQLLKKLD…GGEVKGKAVS (146 aa)). Residues 610 to 657 (DVEQLNKIVESKQEIIEEVLDEEKQAKEILQAEMQLAKASNMMKHEKE) adopt a coiled-coil conformation. The segment at 650-741 (NMMKHEKEIQ…GSSKGGKRRK (92 aa)) is disordered. A compositionally biased stretch (basic and acidic residues) spans 652-672 (MKHEKEIQSRPKRTWFESEKD). The span at 686–697 (KHGKKVNSKKRK) shows a compositional bias: basic residues. Over residues 698–723 (AIEVKKDDGGRSYKKTKVDRITDQKR) the composition is skewed to basic and acidic residues.

This sequence belongs to the DEAD box helicase family. DDX27/DRS1 subfamily. In terms of assembly, associates with pre-ribosomal particles.

It is found in the nucleus. It localises to the nucleolus. The enzyme catalyses ATP + H2O = ADP + phosphate + H(+). ATP-binding RNA helicase involved in ribosome assembly. In Scheffersomyces stipitis (strain ATCC 58785 / CBS 6054 / NBRC 10063 / NRRL Y-11545) (Yeast), this protein is ATP-dependent RNA helicase DRS1 (DRS1).